The following is a 329-amino-acid chain: GTP 3',8-cyclase (329 aa).

The region spanning Ala8–Ala234 is the Radical SAM core domain. Arg17 is a GTP binding site. The [4Fe-4S] cluster site is built by Cys24 and Cys28. Tyr30 contributes to the S-adenosyl-L-methionine binding site. Position 31 (Cys31) interacts with [4Fe-4S] cluster. Arg68 contributes to the GTP binding site. S-adenosyl-L-methionine is bound at residue Gly72. GTP is bound at residue Thr99. Residue Ser123 coordinates S-adenosyl-L-methionine. Lys160 contributes to the GTP binding site. Residue Met194 coordinates S-adenosyl-L-methionine. Cys257 and Cys260 together coordinate [4Fe-4S] cluster. Arg262–Arg264 provides a ligand contact to GTP. Cys274 is a [4Fe-4S] cluster binding site.

It belongs to the radical SAM superfamily. MoaA family. As to quaternary structure, monomer and homodimer. It depends on [4Fe-4S] cluster as a cofactor.

The catalysed reaction is GTP + AH2 + S-adenosyl-L-methionine = (8S)-3',8-cyclo-7,8-dihydroguanosine 5'-triphosphate + 5'-deoxyadenosine + L-methionine + A + H(+). It participates in cofactor biosynthesis; molybdopterin biosynthesis. Its function is as follows. Catalyzes the cyclization of GTP to (8S)-3',8-cyclo-7,8-dihydroguanosine 5'-triphosphate. In Escherichia coli O45:K1 (strain S88 / ExPEC), this protein is GTP 3',8-cyclase.